Reading from the N-terminus, the 248-residue chain is Large ribosomal subunit protein uL4 (248 aa).

A disordered region spans residues 45-105 (PYGADPYAGM…KDQSKSVNTK (61 aa)). The segment covering 92 to 105 (PKAEKDQSKSVNTK) has biased composition (basic and acidic residues).

The protein belongs to the universal ribosomal protein uL4 family. Part of the 50S ribosomal subunit.

In terms of biological role, one of the primary rRNA binding proteins, this protein initially binds near the 5'-end of the 23S rRNA. It is important during the early stages of 50S assembly. It makes multiple contacts with different domains of the 23S rRNA in the assembled 50S subunit and ribosome. Forms part of the polypeptide exit tunnel. This is Large ribosomal subunit protein uL4 from Haloquadratum walsbyi (strain DSM 16790 / HBSQ001).